We begin with the raw amino-acid sequence, 517 residues long: Lysine--tRNA ligase (517 aa).

Positions 1-21 (MTEPNRAQAPAQNKAAADTPA) are disordered. Low complexity predominate over residues 7-20 (AQAPAQNKAAADTP). The Mg(2+) site is built by E427 and E434.

This sequence belongs to the class-II aminoacyl-tRNA synthetase family. Homodimer. Mg(2+) is required as a cofactor.

Its subcellular location is the cytoplasm. The enzyme catalyses tRNA(Lys) + L-lysine + ATP = L-lysyl-tRNA(Lys) + AMP + diphosphate. This Cupriavidus taiwanensis (strain DSM 17343 / BCRC 17206 / CCUG 44338 / CIP 107171 / LMG 19424 / R1) (Ralstonia taiwanensis (strain LMG 19424)) protein is Lysine--tRNA ligase.